A 314-amino-acid chain; its full sequence is Acetyl-coenzyme A carboxylase carboxyl transferase subunit alpha (314 aa).

The CoA carboxyltransferase C-terminal domain maps to 32–289 (EIDMLEASLA…KRTFESHLSE (258 aa)).

It belongs to the AccA family. As to quaternary structure, acetyl-CoA carboxylase is a heterohexamer composed of biotin carboxyl carrier protein (AccB), biotin carboxylase (AccC) and two subunits each of ACCase subunit alpha (AccA) and ACCase subunit beta (AccD).

Its subcellular location is the cytoplasm. It catalyses the reaction N(6)-carboxybiotinyl-L-lysyl-[protein] + acetyl-CoA = N(6)-biotinyl-L-lysyl-[protein] + malonyl-CoA. Its pathway is lipid metabolism; malonyl-CoA biosynthesis; malonyl-CoA from acetyl-CoA: step 1/1. Component of the acetyl coenzyme A carboxylase (ACC) complex. First, biotin carboxylase catalyzes the carboxylation of biotin on its carrier protein (BCCP) and then the CO(2) group is transferred by the carboxyltransferase to acetyl-CoA to form malonyl-CoA. The chain is Acetyl-coenzyme A carboxylase carboxyl transferase subunit alpha from Staphylococcus saprophyticus subsp. saprophyticus (strain ATCC 15305 / DSM 20229 / NCIMB 8711 / NCTC 7292 / S-41).